The chain runs to 709 residues: ATP-binding cassette sub-family F member 3 (709 aa).

Ala-2 carries the N-acetylalanine modification. A Phosphoserine modification is found at Ser-83. Residues 129–143 (RLKAKQEKRSEKETL) are compositionally biased toward basic and acidic residues. The disordered stretch occupies residues 129–171 (RLKAKQEKRSEKETLKTSNPLVLEEASASQAGSRKESRLESSG). A phosphoserine mark is found at Ser-155, Ser-157, and Ser-161. The span at 161–171 (SRKESRLESSG) shows a compositional bias: basic and acidic residues. 2 consecutive ABC transporter domains span residues 178–424 (VRIE…LNQQ) and 492–707 (LQLD…RREG). 210–217 (GRNGLGKT) contacts ATP. Ser-283 bears the Phosphoserine mark. 525–532 (GENGAGKS) provides a ligand contact to ATP.

It belongs to the ABC transporter superfamily. ABCF family. EF3 subfamily.

In terms of biological role, displays an antiviral effect against flaviviruses such as west Nile virus (WNV) in the presence of OAS1B. The chain is ATP-binding cassette sub-family F member 3 (Abcf3) from Mus musculus (Mouse).